A 956-amino-acid polypeptide reads, in one-letter code: MSSGLWSQEKVTSPYWEERIFYLLLQECSVTDKQTQKLLKVPKGSIGQYIQDRSVGHSRIPSAKGKKNQIGLKILEQPHAVLFVDEKDVVEINEKFTELLLAITNCEERFSLFKNRNRLSKGLQIDVGCPVKVQLRSGEEKFPGVVRFRGPLLAERTVSGIFFGVELLEEGRGQGFTDGVYQGKQLFQCDEDCGVFVALDKLELIEDDDTALESDYAGPGDTMQVELPPLEINSRVSLKVGETIESGTVIFCDVLPGKESLGYFVGVDMDNPIGNWDGRFDGVQLCSFACVESTILLHINDIIPALSESVTQERRPPKLAFMSRGVGDKGSSSHNKPKATGSTSDPGNRNRSELFYTLNGSSVDSQPQSKSKNTWYIDEVAEDPAKSLTEISTDFDRSSPPLQPPPVNSLTTENRFHSLPFSLTKMPNTNGSIGHSPLSLSAQSVMEELNTAPVQESPPLAMPPGNSHGLEVGSLAEVKENPPFYGVIRWIGQPPGLNEVLAGLELEDECAGCTDGTFRGTRYFTCALKKALFVKLKSCRPDSRFASLQPVSNQIERCNSLAFGGYLSEVVEENTPPKMEKEGLEIMIGKKKGIQGHYNSCYLDSTLFCLFAFSSVLDTVLLRPKEKNDVEYYSETQELLRTEIVNPLRIYGYVCATKIMKLRKILEKVEAASGFTSEEKDPEEFLNILFHHILRVEPLLKIRSAGQKVQDCYFYQIFMEKNEKVGVPTIQQLLEWSFINSNLKFAEAPSCLIIQMPRFGKDFKLFKKIFPSLELNITDLLEDTPRQCRICGGLAMYECRECYDDPDISAGKIKQFCKTCNTQVHLHPKRLNHKYNPVSLPKDLPDWDWRHGCIPCQNMELFAVLCIETSHYVAFVKYGKDDSAWLFFDSMADRDGGQNGFNIPQVTPCPEVGEYLKMSLEDLHSLDSRRIQGCARRLLCDAYMCMYQSPTMSLYK.

Residues 106-593 (CEERFSLFKN…LEIMIGKKKG (488 aa)) form an interaction with TRIP region. 2 consecutive CAP-Gly domains span residues 153–198 (LAER…VFVA) and 253–286 (DVLP…VQLC). The interval 309–353 (SVTQERRPPKLAFMSRGVGDKGSSSHNKPKATGSTSDPGNRNRSE) is disordered. Polar residues predominate over residues 330 to 349 (GSSSHNKPKATGSTSDPGNR). Serine 387 bears the Phosphoserine mark. The segment at 392-411 (STDFDRSSPPLQPPPVNSLT) is disordered. Residues 394 to 469 (DFDRSSPPLQ…LAMPPGNSHG (76 aa)) are interaction with TRAF2. Phosphoserine is present on residues serine 418 and serine 422. Residues 470–554 (LEVGSLAEVK…FASLQPVSNQ (85 aa)) form an interaction with IKBKG/NEMO region. Residues 492-535 (GQPPGLNEVLAGLELEDECAGCTDGTFRGTRYFTCALKKALFVK) form the CAP-Gly 3 domain. Residues 592–950 (KGIQGHYNSC…DAYMCMYQSP (359 aa)) enclose the USP domain. Cysteine 601 serves as the catalytic Nucleophile. The tract at residues 781-833 (LEDTPRQCRICGGLAMYECRECYDDPDISAGKIKQFCKTCNTQVHLHPKRLNH) is B-box. The Zn(2+) site is built by cysteine 788, cysteine 791, cysteine 799, cysteine 802, cysteine 817, cysteine 820, histidine 825, and histidine 833. Histidine 871 functions as the Proton acceptor in the catalytic mechanism.

Belongs to the peptidase C19 family. In terms of assembly, interacts (via CAP-Gly domain) with IKBKG/NEMO (via proline-rich C-terminal region). Interacts with TRAF2 and TRIP. Interacts with PLK1, DVL1, DVL3, MAVS, TBK1, IKKE and RIGI. Interacts (via CAP-Gly domain) with microtubules. Interacts with HDAC6 and BCL3. Interacts with MAP3K7. Identified in a complex with TRAF6 and SQSTM1. Interacts with OPTN and SQSTM1. Interacts with CEP350. Interacts with RNF31; the interaction is indirect and is mediated via SPATA2. Interacts with SPATA2 (via the PUB domain); the interaction is direct and recruits CYLD to the LUBAC complex, thereby regulating TNF-alpha-induced necroptosis. In terms of processing, ubiquitinated. Polyubiquitinated in hepatocytes treated with palmitic acid. Ubiquitination is mediated by E3 ligase TRIM47 and leads to proteasomal degradation. Phosphorylated on several serine residues by IKKA and/or IKKB in response to immune stimuli. Phosphorylation requires IKBKG. Phosphorylation abolishes TRAF2 deubiquitination, interferes with the activation of Jun kinases, and strongly reduces CD40-dependent gene activation by NF-kappa-B. Detected in fetal brain, testis, and skeletal muscle, and at a lower level in adult brain, leukocytes, liver, heart, kidney, spleen, ovary and lung. Isoform 2 is found in all tissues except kidney.

The protein localises to the cytoplasm. It localises to the perinuclear region. Its subcellular location is the cytoskeleton. It is found in the cell membrane. The protein resides in the microtubule organizing center. The protein localises to the centrosome. It localises to the spindle. Its subcellular location is the cilium basal body. The enzyme catalyses Thiol-dependent hydrolysis of ester, thioester, amide, peptide and isopeptide bonds formed by the C-terminal Gly of ubiquitin (a 76-residue protein attached to proteins as an intracellular targeting signal).. With respect to regulation, inhibited by phosphorylation at serine residues. Deubiquitinase that specifically cleaves 'Lys-63'- and linear 'Met-1'-linked polyubiquitin chains and is involved in NF-kappa-B activation and TNF-alpha-induced necroptosis. Negatively regulates NF-kappa-B activation by deubiquitinating upstream signaling factors. Contributes to the regulation of cell survival, proliferation and differentiation via its effects on NF-kappa-B activation. Negative regulator of Wnt signaling. Inhibits HDAC6 and thereby promotes acetylation of alpha-tubulin and stabilization of microtubules. Plays a role in the regulation of microtubule dynamics, and thereby contributes to the regulation of cell proliferation, cell polarization, cell migration, and angiogenesis. Required for normal cell cycle progress and normal cytokinesis. Inhibits nuclear translocation of NF-kappa-B. Plays a role in the regulation of inflammation and the innate immune response, via its effects on NF-kappa-B activation. Dispensable for the maturation of intrathymic natural killer cells, but required for the continued survival of immature natural killer cells. Negatively regulates TNFRSF11A signaling and osteoclastogenesis. Involved in the regulation of ciliogenesis, allowing ciliary basal bodies to migrate and dock to the plasma membrane; this process does not depend on NF-kappa-B activation. Ability to remove linear ('Met-1'-linked) polyubiquitin chains regulates innate immunity and TNF-alpha-induced necroptosis: recruited to the LUBAC complex via interaction with SPATA2 and restricts linear polyubiquitin formation on target proteins. Regulates innate immunity by restricting linear polyubiquitin formation on RIPK2 in response to NOD2 stimulation. Involved in TNF-alpha-induced necroptosis by removing linear ('Met-1'-linked) polyubiquitin chains from RIPK1, thereby regulating the kinase activity of RIPK1. Negatively regulates intestinal inflammation by removing 'Lys-63' linked polyubiquitin chain of NLRP6, thereby reducing the interaction between NLRP6 and PYCARD/ASC and formation of the NLRP6 inflammasome. Does not catalyze deubiquitination of heterotypic 'Lys-63'-/'Lys-48'-linked branched ubiquitin chains. Removes 'Lys-63' linked polyubiquitin chain of MAP3K7, which inhibits phosphorylation and blocks downstream activation of the JNK-p38 kinase cascades. Also removes 'Lys-63'-linked polyubiquitin chains of MAP3K1 and MA3P3K3, which inhibit their interaction with MAP2K1 and MAP2K2. In Homo sapiens (Human), this protein is Ubiquitin carboxyl-terminal hydrolase CYLD.